Consider the following 337-residue polypeptide: Draxin (337 aa).

The N-terminal stretch at 1–24 is a signal peptide; sequence MLLLALLLLLELSLAGSLGPGSSA. 3 disordered regions span residues 36–67, 107–133, and 234–261; these read GPAL…WTQD, RPYP…KRRK, and WPST…KGEP. Composition is skewed to basic residues over residues 122 to 133 and 237 to 246; these read VKKRGREHKRRK and TRKKEKHRGK. N252 is a glycosylation site (N-linked (GlcNAc...) asparagine).

This sequence belongs to the draxin family. Interacts with LRP6.

The protein resides in the secreted. Functionally, chemorepulsive axon guidance protein required for the development of spinal cord and forebrain commissures. Acts as a chemorepulsive guidance protein for commissural axons during development. Able to inhibit or repel neurite outgrowth from dorsal spinal cord. Inhibits the stabilization of cytosolic beta-catenin (CTNNB1) via its interaction with LRP6, thereby acting as an antagonist of Wnt signaling pathway. This is Draxin from Bos taurus (Bovine).